We begin with the raw amino-acid sequence, 772 residues long: Hyperosmolality-gated Ca2+ permeable channel 1.1 (772 aa).

Residues 1-5 lie on the Extracellular side of the membrane; it reads MATLK. The helical transmembrane segment at 6–28 threads the bilayer; that stretch reads DIGVSAGINILTAFIFFIIFAFL. At 29–100 the chain is on the cytoplasmic side; the sequence is RLQPFNDRVY…AGLDSVVYLR (72 aa). The helical transmembrane segment at 101–122 threads the bilayer; sequence IYWLGLKIFAPIAMLAWAVLVP. Topologically, residues 123 to 159 are extracellular; it reads VNWTNNELELAKHFKNVTSSDIDKLTISNIPEGSNRF. N-linked (GlcNAc) asparagine glycosylation is present at Asn-138. A helical membrane pass occupies residues 160–180; the sequence is WAHIIMAYAFTIWTCYMLMKE. Over 181–372 the chain is Cytoplasmic; that stretch reads YETVANMRLQ…PNLAIPYVSL (192 aa). A cytoplasmic region required for homodimerization region spans residues 339 to 344; the sequence is QTTQTR. A helical transmembrane segment spans residues 373 to 398; the sequence is TVRRLVMNVAFFFLTFFFIIPIAFVQ. At 399–424 the chain is on the extracellular side; it reads SLATIEGIEKVAPFLKVIIEKDFIKS. A helical membrane pass occupies residues 425–450; sequence LIQGLLAGIALKLFLIFLPAILMTMS. Residues 451–461 are Cytoplasmic-facing; it reads KFEGFTSVSFL. Residues 462–485 traverse the membrane as a helical segment; that stretch reads ERRSASRYYIFNLVNVFLGSVIAG. At 486-509 the chain is on the extracellular side; sequence AAFEQLNSFLNQSPNQIPKTIGMA. The helical transmembrane segment at 510–538 threads the bilayer; it reads IPMKATFFITYIMVDGWAGVAGEILMLKP. Topologically, residues 539-566 are cytoplasmic; the sequence is LIIYHLKNAFLVKTEKDREEAMNPGSIG. A helical membrane pass occupies residues 567–587; the sequence is FNTGEPQIQLYFLLGLVYAPV. A topological domain (extracellular) is located at residue Thr-588. A helical transmembrane segment spans residues 589 to 606; it reads PMLLPFILVFFALAYVVY. Residues 607 to 624 are Cytoplasmic-facing; sequence RHQIINVYNQEYESAAAF. A helical membrane pass occupies residues 625 to 647; that stretch reads WPDVHGRVITALIISQLLLMGLL. Residues 648 to 653 are Extracellular-facing; that stretch reads GTKHAA. The helical transmembrane segment at 654-674 threads the bilayer; sequence SAAPFLIALPVITIGFHRFCK. Residues 675 to 772 lie on the Cytoplasmic side of the membrane; sequence GRFEPAFVRY…SLAVINGKEV (98 aa). Residues 686–688 form a cytoplasmic region required for homodimerization region; that stretch reads LQE. Residues 743–772 are disordered; the sequence is KRQSRRNTPAPSRISGESSPSLAVINGKEV. A compositionally biased stretch (polar residues) spans 748 to 763; the sequence is RNTPAPSRISGESSPS.

The protein belongs to the CSC1 (TC 1.A.17) family. Homodimer. As to expression, expressed in leaves, flowers, roots and guard cells.

Its subcellular location is the cell membrane. Its activity is regulated as follows. Activated by mechanical pressure. Functionally, acts as a hyperosmolarity-gated non-selective cation channel that permeates Ca(2+) ions. Shows the following permeability sequence: K(+) &gt; Ba(2+) = Ca(2+) &gt; Na(+) = Mg(2+) = Cs(+). Mechanosensitive ion channel that converts mechanical stimuli into a flow of ions: activated in response to membrane stretch and poke. In Arabidopsis thaliana (Mouse-ear cress), this protein is Hyperosmolality-gated Ca2+ permeable channel 1.1.